The primary structure comprises 148 residues: D-aminoacyl-tRNA deacylase (148 aa).

Positions 137–138 match the Gly-cisPro motif, important for rejection of L-amino acids motif; it reads GP.

It belongs to the DTD family. As to quaternary structure, homodimer.

Its subcellular location is the cytoplasm. It catalyses the reaction glycyl-tRNA(Ala) + H2O = tRNA(Ala) + glycine + H(+). The catalysed reaction is a D-aminoacyl-tRNA + H2O = a tRNA + a D-alpha-amino acid + H(+). Functionally, an aminoacyl-tRNA editing enzyme that deacylates mischarged D-aminoacyl-tRNAs. Also deacylates mischarged glycyl-tRNA(Ala), protecting cells against glycine mischarging by AlaRS. Acts via tRNA-based rather than protein-based catalysis; rejects L-amino acids rather than detecting D-amino acids in the active site. By recycling D-aminoacyl-tRNA to D-amino acids and free tRNA molecules, this enzyme counteracts the toxicity associated with the formation of D-aminoacyl-tRNA entities in vivo and helps enforce protein L-homochirality. The chain is D-aminoacyl-tRNA deacylase from Aquifex aeolicus (strain VF5).